We begin with the raw amino-acid sequence, 432 residues long: DnaJ-like protein 1 (432 aa).

The 70-residue stretch at 4 to 73 (DTEYYDLLGV…RAKYDKYGRK (70 aa)) folds into the J domain. The tract at residues 117–187 (NAEDEAEKEK…KKNEQVGAEA (71 aa)) is disordered.

This sequence belongs to the DnaJ family. As to quaternary structure, interacts with SLN1.

Its subcellular location is the cytoplasm. In terms of biological role, required for peroxisomal protein import which maintains the function of peroxisomes. This chain is DnaJ-like protein 1 (DJP1), found in Saccharomyces cerevisiae (strain ATCC 204508 / S288c) (Baker's yeast).